Consider the following 271-residue polypeptide: Mannosyl-3-phosphoglycerate phosphatase (271 aa).

Asp13 serves as the catalytic Nucleophile. Mg(2+) is bound by residues Asp13, Asp15, and Asp214.

This sequence belongs to the HAD-like hydrolase superfamily. MPGP family. Mg(2+) serves as cofactor.

Its subcellular location is the cytoplasm. It catalyses the reaction 2-O-(alpha-D-mannosyl)-3-phosphoglycerate + H2O = (2R)-2-O-(alpha-D-mannosyl)-glycerate + phosphate. This chain is Mannosyl-3-phosphoglycerate phosphatase, found in Escherichia coli (strain SMS-3-5 / SECEC).